The chain runs to 87 residues: Small ribosomal subunit protein uS17 (87 aa).

This sequence belongs to the universal ribosomal protein uS17 family. As to quaternary structure, part of the 30S ribosomal subunit.

One of the primary rRNA binding proteins, it binds specifically to the 5'-end of 16S ribosomal RNA. This Neisseria meningitidis serogroup C (strain 053442) protein is Small ribosomal subunit protein uS17.